Consider the following 549-residue polypeptide: Cytoplasmic trehalase (549 aa).

Substrate contacts are provided by residues R168, 175–176 (WD), N212, 221–223 (RSQ), 292–294 (RDE), and G324. Active-site proton donor/acceptor residues include D326 and E509. Residue E525 participates in substrate binding.

The protein belongs to the glycosyl hydrolase 37 family. As to quaternary structure, monomer.

Its subcellular location is the cytoplasm. The enzyme catalyses alpha,alpha-trehalose + H2O = alpha-D-glucose + beta-D-glucose. It participates in glycan degradation; trehalose degradation; D-glucose from alpha,alpha-trehalose: step 1/1. Its function is as follows. Hydrolyzes trehalose to glucose. Could be involved, in cells returning to low osmolarity conditions, in the utilization of the accumulated cytoplasmic trehalose, which was synthesized in response to high osmolarity. This is Cytoplasmic trehalase from Escherichia coli O157:H7.